A 242-amino-acid chain; its full sequence is Carbendazim hydrolyzing esterase (242 aa).

The active-site Acyl-ester intermediate is the Ser77.

The protein belongs to the AB hydrolase superfamily.

The protein resides in the secreted. The enzyme catalyses carbendazim + H2O = 2-aminobenzimidazole + methanol + CO2. The catalysed reaction is carbendazim + H2O = N-(1H-1,3-benzodiazol-2-yl)carbamate + methanol + H(+). It carries out the reaction N-(1H-1,3-benzodiazol-2-yl)carbamate + H(+) = 2-aminobenzimidazole + CO2. Functionally, catalyzes the hydrolysis of the fungicide carbendazim (methyl-1H-benzimidazol-2-ylcarbamate or MBC) to 2-aminobenzimidazole (2-AB). Following hydrolysis of the carbamate ester, the carbamate decarboxylates spontaneously. Can hydrolyze model carboxylesters such as methyl salicylate, alpha-naphthyl acetate and p-nitrophenyl acetate. In addition, shows substantial hydrolytic activity in vitro against widespread pollutants with carboxylester, carbamate and amide linkages, such as dimethyl phthalate, propanil and chlorpropham. The chain is Carbendazim hydrolyzing esterase from Nocardioides sp. (strain SG-4G).